Consider the following 418-residue polypeptide: D-inositol 3-phosphate glycosyltransferase 1 (418 aa).

UDP-N-acetyl-alpha-D-glucosamine is bound by residues 24–25 (QP) and Gly-32. 1D-myo-inositol 3-phosphate-binding positions include 29-34 (DAGGLN), Lys-87, His-115, Ser-139, and Gln-159. 2 residues coordinate UDP-N-acetyl-alpha-D-glucosamine: Arg-233 and Lys-238. Residues Tyr-308, Arg-309, and Ala-311 each contribute to the Mg(2+) site. UDP-N-acetyl-alpha-D-glucosamine is bound by residues Glu-321 and Glu-329. Mg(2+) is bound at residue Thr-335.

It belongs to the glycosyltransferase group 1 family. MshA subfamily. In terms of assembly, homodimer.

The enzyme catalyses 1D-myo-inositol 3-phosphate + UDP-N-acetyl-alpha-D-glucosamine = 1D-myo-inositol 2-acetamido-2-deoxy-alpha-D-glucopyranoside 3-phosphate + UDP + H(+). Catalyzes the transfer of a N-acetyl-glucosamine moiety to 1D-myo-inositol 3-phosphate to produce 1D-myo-inositol 2-acetamido-2-deoxy-glucopyranoside 3-phosphate in the mycothiol biosynthesis pathway. The protein is D-inositol 3-phosphate glycosyltransferase 1 of Catenulispora acidiphila (strain DSM 44928 / JCM 14897 / NBRC 102108 / NRRL B-24433 / ID139908).